The following is a 1593-amino-acid chain: Nischarin (1593 aa).

Positions 1–134 are necessary for binding to phosphoinositide-3-P; not sufficient for targeting to endosomes; the sequence is MAAATLSFGP…GVTAALAEEL (134 aa). The region spanning 12–122 is the PX domain; the sequence is REAEPAKEAR…AHFLHFHLYE (111 aa). The interval 121 to 695 is necessary for homooligomerization and targeting to endosomes; that stretch reads YEVNGVTAAL…ERLALEWALG (575 aa). The interval 246 to 869 is interaction with PAK1; the sequence is MSVRFSATSM…LVYSDKRMVQ (624 aa). LRR repeat units lie at residues 290-311, 313-334, 335-356, 358-379, 380-401, and 405-426; these read ALTT…VKLI, KIEY…QHLY, NLVH…HTKL, NVKT…HKLY, SLVN…KSIG, and CLER…RTKV. Residues 466 to 480 show a composition bias toward basic and acidic residues; the sequence is SKLSNTEKKAGEDFR. Residues 466-499 form a disordered region; it reads SKLSNTEKKAGEDFRLPPAPCIRPGGSPPAAPAS. The span at 482-496 shows a compositional bias: pro residues; that stretch reads PPAPCIRPGGSPPAA. Residues serine 543, serine 545, and serine 548 each carry the phosphoserine modification. Positions 624-694 form a coiled coil; it reads IEAANQREEA…EERLALEWAL (71 aa). A disordered region spans residues 629–687; that stretch reads QREEAHGEQGEEEEEEEEEEDVAENRYFEMGPPDAEEEEGSGQGEEDEEDEDEEAEEER. Composition is skewed to acidic residues over residues 638-650 and 662-685; these read GEEE…EEDV and DAEE…EAEE. Residues 661–869 form an interaction with LIMK region; sequence PDAEEEEGSG…LVYSDKRMVQ (209 aa). Residues 709 to 807 form an interaction with ITGA5 region; that stretch reads KVLWCFLIHV…ANLHEFHADL (99 aa). Residues 1016–1185 form a disordered region; that stretch reads NPSAKPRNQP…PAGGPAPAEA (170 aa). 2 stretches are compositionally biased toward low complexity: residues 1038-1069 and 1081-1158; these read ETPA…LAPV and AEAP…APAP. 10 repeat units span residues 1081–1086, 1087–1092, 1093–1098, 1099–1104, 1105–1110, 1111–1116, 1123–1128, 1129–1134, 1135–1140, and 1141–1146. The tract at residues 1081–1146 is 10 X 6 AA tandem repeat of A-E-A-P-A-A; that stretch reads AEAPAAAEAP…APAAAEAPAA (66 aa). Pro residues predominate over residues 1159–1179; sequence NQAPAPARGPAPARGPAPAGG. Threonine 1371 is subject to Phosphothreonine. Serine 1373 is subject to Phosphoserine.

As to quaternary structure, homooligomer. Interacts with GRB2. Interacts with PIK3R1; probably associates with the PI3-kinase complex. Interacts with IRS4. Found in a complex with ITGA5 and PAK1. Found in a complex with LIMK1 and PAK1. Interacts with ITGA5 (via cytoplasmic domain); this interaction is direct. Interacts with PAK1 (via kinase domain); this interaction is direct and is increased upon activation of PAK1. Interacts with LIMK1 (via PDZ and kinase domain); this interaction is direct. Interacts with LIMK2; this interaction depends on LIMK2 activity. Interacts with RAC1 (activated state). Interacts with STK11; this interaction may increase STK11 activity. Highly expressed in brain and kidney. Moderately expressed in heart, liver, lung and skeletal muscle. Not detected in spleen and testis.

The protein resides in the cell membrane. It is found in the cytoplasm. The protein localises to the early endosome. Its subcellular location is the recycling endosome. Its function is as follows. Acts either as the functional imidazoline-1 receptor (I1R) candidate or as a membrane-associated mediator of the I1R signaling. Binds numerous imidazoline ligands that induces initiation of cell-signaling cascades triggering to cell survival, growth and migration. Its activation by the agonist rilmenidine induces an increase in phosphorylation of mitogen-activated protein kinases MAPK1 and MAPK3 in rostral ventrolateral medulla (RVLM) neurons that exhibited rilmenidine-evoked hypotension. Blocking its activation with efaroxan abolished rilmenidine-induced mitogen-activated protein kinase phosphorylation in RVLM neurons. Acts as a modulator of Rac-regulated signal transduction pathways. Suppresses Rac1-stimulated cell migration by interacting with PAK1 and inhibiting its kinase activity. Also blocks Pak-independent Rac signaling by interacting with RAC1 and inhibiting Rac1-stimulated NF-kB response element and cyclin D1 promoter activation. Also inhibits LIMK1 kinase activity by reducing LIMK1 'Tyr-508' phosphorylation. Inhibits Rac-induced cell migration and invasion in breast and colon epithelial cells. Inhibits lamellipodia formation, when overexpressed. Plays a role in protection against apoptosis. Involved in association with IRS4 in the enhancement of insulin activation of MAPK1 and MAPK3. When overexpressed, induces a redistribution of cell surface ITGA5 integrin to intracellular endosomal structures. This is Nischarin (Nisch) from Mus musculus (Mouse).